A 423-amino-acid chain; its full sequence is Protein CLP1 homolog (423 aa).

ATP is bound by residues glutamate 19, lysine 60, and 122 to 127; that span reads DVGKTT.

The protein belongs to the Clp1 family. Clp1 subfamily.

The protein resides in the nucleus. Required for endonucleolytic cleavage during polyadenylation-dependent pre-mRNA 3'-end formation. This is Protein CLP1 homolog (cbc) from Anopheles gambiae (African malaria mosquito).